Consider the following 419-residue polypeptide: 26S proteasome regulatory subunit 8 homolog B (419 aa).

202-209 contacts ATP; sequence GPPGTGKT. Lys-406 is covalently cross-linked (Glycyl lysine isopeptide (Lys-Gly) (interchain with G-Cter in ubiquitin)).

This sequence belongs to the AAA ATPase family. As to quaternary structure, component of the 19S regulatory particle (RP/PA700) base subcomplex of the 26S proteasome. The 26S proteasome is composed of a core protease (CP), known as the 20S proteasome, capped at one or both ends by the 19S regulatory particle (RP/PA700). The RP/PA700 complex is composed of at least 17 different subunits in two subcomplexes, the base and the lid, which form the portions proximal and distal to the 20S proteolytic core, respectively.

The protein resides in the cytoplasm. It is found in the nucleus. Functionally, the 26S proteasome is involved in the ATP-dependent degradation of ubiquitinated proteins. The regulatory (or ATPase) complex confers ATP dependency and substrate specificity to the 26S complex. This Arabidopsis thaliana (Mouse-ear cress) protein is 26S proteasome regulatory subunit 8 homolog B (RPT6B).